The following is a 291-amino-acid chain: HTH-type transcriptional regulator DgcR (291 aa).

The region spanning 1-58 (MRLRHIEVFHAIYTTGSITNAAKALHVSQPSVSKVLSHAEMQLGFKLFERVKGRLIPT) is the HTH lysR-type domain. The H-T-H motif DNA-binding region spans 18-37 (ITNAAKALHVSQPSVSKVLS).

This sequence belongs to the LysR transcriptional regulatory family.

Its function is as follows. Transcriptional regulator that positively regulates the expression of the D-Glu gene cluster (DGC). The cluster includes dgcN and dgcA, which are involved in a deamination-independent D-glutamate degradation pathway, dgcR itself, dgcT, dgcP and dgcH. Acts by binding the consensus sequence upstream of dgcR, dgcT, dgcP and dgcH. In Pseudoalteromonas sp, this protein is HTH-type transcriptional regulator DgcR.